The primary structure comprises 128 residues: Putative esterase aq_1494 (128 aa).

The active site involves D15.

The protein belongs to the 4-hydroxybenzoyl-CoA thioesterase family.

The polypeptide is Putative esterase aq_1494 (Aquifex aeolicus (strain VF5)).